A 212-amino-acid chain; its full sequence is Ribosomal RNA small subunit methyltransferase G (212 aa).

S-adenosyl-L-methionine contacts are provided by residues Gly-73, Phe-78, 124 to 125, and Arg-137; that span reads IE.

Belongs to the methyltransferase superfamily. RNA methyltransferase RsmG family.

It is found in the cytoplasm. Functionally, specifically methylates the N7 position of a guanine in 16S rRNA. In Karelsulcia muelleri (strain GWSS) (Sulcia muelleri), this protein is Ribosomal RNA small subunit methyltransferase G.